Here is a 322-residue protein sequence, read N- to C-terminus: HPr kinase/phosphorylase (322 aa).

Active-site residues include histidine 146 and lysine 167. 161 to 168 is an ATP binding site; the sequence is GDSGLGKS. Serine 168 contacts Mg(2+). Aspartate 185 (proton acceptor; for phosphorylation activity. Proton donor; for dephosphorylation activity) is an active-site residue. Positions 209–218 are important for the catalytic mechanism of both phosphorylation and dephosphorylation; it reads LEVRGLGLLD. Glutamate 210 lines the Mg(2+) pocket. Arginine 250 is an active-site residue. Residues 271–276 are important for the catalytic mechanism of dephosphorylation; the sequence is QVAAGR.

This sequence belongs to the HPrK/P family. In terms of assembly, homohexamer. The cofactor is Mg(2+).

The enzyme catalyses [HPr protein]-L-serine + ATP = [HPr protein]-O-phospho-L-serine + ADP + H(+). It catalyses the reaction [HPr protein]-O-phospho-L-serine + phosphate + H(+) = [HPr protein]-L-serine + diphosphate. Catalyzes the ATP- as well as the pyrophosphate-dependent phosphorylation of a specific serine residue in HPr, a phosphocarrier protein of the phosphoenolpyruvate-dependent sugar phosphotransferase system (PTS). HprK/P also catalyzes the pyrophosphate-producing, inorganic phosphate-dependent dephosphorylation (phosphorolysis) of seryl-phosphorylated HPr (P-Ser-HPr). The chain is HPr kinase/phosphorylase from Burkholderia cenocepacia (strain HI2424).